Here is a 177-residue protein sequence, read N- to C-terminus: Peptide methionine sulfoxide reductase MsrA (177 aa).

Cys10 is an active-site residue.

This sequence belongs to the MsrA Met sulfoxide reductase family.

It catalyses the reaction L-methionyl-[protein] + [thioredoxin]-disulfide + H2O = L-methionyl-(S)-S-oxide-[protein] + [thioredoxin]-dithiol. The catalysed reaction is [thioredoxin]-disulfide + L-methionine + H2O = L-methionine (S)-S-oxide + [thioredoxin]-dithiol. In terms of biological role, has an important function as a repair enzyme for proteins that have been inactivated by oxidation. Catalyzes the reversible oxidation-reduction of methionine sulfoxide in proteins to methionine. This chain is Peptide methionine sulfoxide reductase MsrA, found in Saccharolobus solfataricus (strain ATCC 35092 / DSM 1617 / JCM 11322 / P2) (Sulfolobus solfataricus).